Consider the following 355-residue polypeptide: METLKDKTLQELEELQNDSEAIDQLALESPEVQDLQLEREMALATNRSLAERNLEFQGPLEISRSNLSDKYQELRKLVERCQEQKAKLEKFSSALQPGTLLDLLQVEGMKIEGESEAMAEKFLEGEVPLETFLENFSSMRMLSHLRRVRVEKLQEVVRKPRASQELAGDAPPPRPPPPVRPVPQGTPPVVEEQPQPPSAMPPYPLPYSLSPSLPVGSTAHGALPPAPFPVVSQPSFYSGPLGPTYPAAQPGPRGAAGYSWSPQRSTPPRPGYPGTPTGASGPGYPLAGGRALSPGYPQQSPYPATGGKPPYPIQPQLPSFPGQPQPSVPLQPPYPPGPAPPYGFPPPPGPAWPGY.

A Phosphoserine modification is found at serine 29. In terms of domain architecture, VPS37 C-terminal spans 78–167; sequence VERCQEQKAK…RKPRASQELA (90 aa). The interval 159 to 355 is disordered; it reads KPRASQELAG…PPPGPAWPGY (197 aa). 2 stretches are compositionally biased toward pro residues: residues 170–186 and 194–205; these read APPP…PQGT and PQPPSAMPPYPL. The segment covering 246–257 has biased composition (low complexity); it reads PAAQPGPRGAAG. The segment covering 321 to 355 has biased composition (pro residues); sequence PGQPQPSVPLQPPYPPGPAPPYGFPPPPGPAWPGY.

It belongs to the VPS37 family. Component of the ESCRT-I complex (endosomal sorting complex required for transport I) which consists of TSG101, VPS28, a VPS37 protein (VPS37A to -D) and MVB12A or MVB12B in a 1:1:1:1 stoichiometry. Interacts with TSG101, VPS28, MVB12A and MVB12B. Component of the ESCRT-I complex (endosomal sorting complex required for transport I) which consists of TSG101, VPS28, a VPS37 protein (VPS37A to -D) and UBAP1 in a 1:1:1:1 stoichiometry. Interacts with HGS and STAM2. Interacts with CEP55. In terms of processing, phosphorylated by TBK1.

Its subcellular location is the late endosome membrane. Its function is as follows. Component of the ESCRT-I complex, a regulator of vesicular trafficking process. Required for the sorting of endocytic ubiquitinated cargos into multivesicular bodies. May be involved in cell growth and differentiation. In Pongo abelii (Sumatran orangutan), this protein is Vacuolar protein sorting-associated protein 37C (VPS37C).